The primary structure comprises 118 residues: Aspartate 1-decarboxylase (118 aa).

Catalysis depends on Ser25, which acts as the Schiff-base intermediate with substrate; via pyruvic acid. At Ser25 the chain carries Pyruvic acid (Ser). Residue Thr57 coordinates substrate. Tyr58 (proton donor) is an active-site residue. 73–75 contributes to the substrate binding site; sequence GAA.

The protein belongs to the PanD family. As to quaternary structure, heterooctamer of four alpha and four beta subunits. Pyruvate is required as a cofactor. Post-translationally, is synthesized initially as an inactive proenzyme, which is activated by self-cleavage at a specific serine bond to produce a beta-subunit with a hydroxyl group at its C-terminus and an alpha-subunit with a pyruvoyl group at its N-terminus.

The protein resides in the cytoplasm. The enzyme catalyses L-aspartate + H(+) = beta-alanine + CO2. It participates in cofactor biosynthesis; (R)-pantothenate biosynthesis; beta-alanine from L-aspartate: step 1/1. Catalyzes the pyruvoyl-dependent decarboxylation of aspartate to produce beta-alanine. In Hyphomonas neptunium (strain ATCC 15444), this protein is Aspartate 1-decarboxylase.